Reading from the N-terminus, the 387-residue chain is Methyltransferase phomM' (387 aa).

Residues 98–223 (PHRPKDLHIL…QSVADLFTTL (126 aa)) are methyltransferase domain.

It belongs to the class I-like SAM-binding methyltransferase superfamily. Erg6/SMT family.

The protein operates within mycotoxin biosynthesis. Its function is as follows. Methyltransferase; part of the gene cluster that mediates the biosynthesis of the phomopsins, a group of hexapeptide mycotoxins which infects lupins and causes lupinosis disease in livestock. Within the pathway, phomM' acts as an S-adenosylmethionine-dependent alpha-N-methyltransferase that catalyzes two successive N-methylation reactions, converting N-desmethyl-phomopsin A to phomopsin A and phomopsin A further to an N,N-dimethylated congener called phomopsin E. The pathway starts with the processing of the precursor phomA' by several endopeptidases including kexin proteases as well as the cluster-specific S41 family peptidase phomP1 and the oligopeptidase phomG' to produce 10 identical copies of the hexapeptide Tyr-Val-Ile-Pro-Ile-Asp. After being excised from the precursor peptide, the core peptides are cyclized and modified post-translationally by enzymes encoded within the gene cluster. The timing and order of proteolysis of the phomA' precursor and PTMs are still unknown. Two tyrosinase-like enzymes, phomQ1' and phomQ2, catalyze the chlorination and hydroxylation of Tyr, respectively. PhomYb, is proposed to be involved in the construction of the macrocyclic structure. The other 4 ustYa family proteins may be involved in PTMs that generate the unique structure of phomopsin A. PhomYa' is required for the hydroxylation of C-beta of Tyr. PhomYc', phomYd', and phomYe are responsible for the biosynthesis of 2,3-dehydroisoleucine (dIle), 2,3-dehydroaspartic acid (dAsp), and 3,4-dehydroproline (dPro), respectively. While dIle formation by phomYc' is indispensable for the installation of dAsp by phomYd', the order of the other PTMs have not been elucidated yet. Most of the biosynthetic enzymes likely have broad substrate specificity, and thus, there might be a metabolic grid from a precursor to phomopsin A. The enzyme(s) responsible for the biosynthesis of 3,4-dehydrovaline (dVal) have also not been identified yet. Finally, phomM' acts as an S-adenosylmethionine-dependent alpha-N-methyltransferase that catalyzes two successive N-methylation reactions, converting N-desmethyl-phomopsin A to phomopsin A and phomopsin A further to an N,N-dimethylated congener called phomopsin E. This chain is Methyltransferase phomM', found in Diaporthe leptostromiformis (Lupinosis disease fungus).